Consider the following 621-residue polypeptide: Chaperone protein HscA homolog (621 aa).

It belongs to the heat shock protein 70 family.

Its function is as follows. Chaperone involved in the maturation of iron-sulfur cluster-containing proteins. Has a low intrinsic ATPase activity which is markedly stimulated by HscB. The polypeptide is Chaperone protein HscA homolog (Pseudomonas fluorescens (strain Pf0-1)).